Consider the following 198-residue polypeptide: uncharacterized protein (198 aa).

An N-terminal signal peptide occupies residues 1 to 28; that stretch reads MHPTQRKLMKRIILFLSLLFCIACPAIA.

This sequence belongs to the fimbrial protein family.

It localises to the fimbrium. Functionally, part of the yadCKLM-htrE-yadVN fimbrial operon. Could contribute to adhesion to various surfaces in specific environmental niches. This is an uncharacterized protein from Escherichia coli (strain K12).